The sequence spans 559 residues: CCR4-NOT transcription complex subunit 6-like (559 aa).

Positions 1 to 148 (MPKEKYDPPD…LYQEPDGTRK (148 aa)) are required for interaction with cnot1, cnot3 and cnot7. The segment at 1–550 (MPKEKYDPPD…NGLHLPVHST (550 aa)) is nuclease domain. LRR repeat units lie at residues 52–73 (HLTA…IAKL), 75–96 (HLVY…LGNM), 98–120 (TLRE…GRLF), and 121–143 (QLQT…YQEP). Residue glutamate 235 participates in Mg(2+) binding. Substrate-binding residues include glutamate 235, glutamate 271, histidine 353, and proline 358. Aspartate 405 provides a ligand contact to Mg(2+). Aspartate 405 acts as the Proton donor/acceptor in catalysis. Positions 407, 474, and 479 each coordinate substrate.

This sequence belongs to the CCR4/nocturin family. Component of the CCR4-NOT complex. It depends on Mg(2+) as a cofactor.

It localises to the cytoplasm. Its subcellular location is the nucleus. It catalyses the reaction Exonucleolytic cleavage of poly(A) to 5'-AMP.. Its function is as follows. Poly(A) nuclease with 3'-5' RNase activity. Catalytic component of the CCR4-NOT complex which is one of the major cellular mRNA deadenylases and is linked to various cellular processes including bulk mRNA degradation, miRNA-mediated repression, translational repression during translational initiation and general transcription regulation. Additional complex functions may be a consequence of its influence on mRNA expression. The chain is CCR4-NOT transcription complex subunit 6-like (cnot6l) from Danio rerio (Zebrafish).